Reading from the N-terminus, the 373-residue chain is DNA replication and repair protein RecF (373 aa).

30–37 provides a ligand contact to ATP; it reads GDNAQGKT.

This sequence belongs to the RecF family.

The protein resides in the cytoplasm. In terms of biological role, the RecF protein is involved in DNA metabolism; it is required for DNA replication and normal SOS inducibility. RecF binds preferentially to single-stranded, linear DNA. It also seems to bind ATP. The protein is DNA replication and repair protein RecF of Oenococcus oeni (strain ATCC BAA-331 / PSU-1).